The chain runs to 701 residues: MRTGASFEVISPHDPAGDQPAAINELERRIRAGERDVVLLGATGTGKSATTAWLIERLQRPTLVMAPNKTLAAQLANELREMLPHNAVEYFVSYYDYYQPEAYIAQTDTYIEKDSSINDDVERLRHSATSALLSRRDVVVVASVSCIYGLGTPQSYLDRSVELQVGTDVPRDGLLRLLVDVQYTRNDLSFTRGSFRVRGDTVEIIPSYEDLAVRIEFFGDGIEALYYLHPLTGDVVRQVDSLRIFPATHYVAGPERMAQAISTIEEELAERLAELEGHGKLLEAHRLRMRTNYDIEMMRQVGFCSGIENYSRHIDGRPAGSAPATLLDYFPEDFLLVIDESHVTVPQIGGMYEGDISRKRNLVEFGFRLPSAVDNRPLQWEEFADRIGQTVYLSATPGPYELSQSGGEFVEQVIRPTGLVDPKVVVKPTKGQIDDLIGEIRQRAEVDQRVLVTTLTKKMAEDLTDYLLEMGIRVRYLHSEVDTLRRVELLRQLRLGEYDVLVGINLLREGLDLPEVSLVAILDADKEGFLRSARSLIQTIGRAARNVSGEVHMYADKITDSMKEAIDETERRRAKQVAYNEANGIDPQPLRKKIADILDQVYREADDTEAAESVPIGGSGRNSSRGRRAQGEPGRAVSAGVFEGRDTSTMPRAELADLIKDLTSQMMVAARDLQFELAARFRDEIADLKKELRGMDAAGLN.

Positions 28–188 (RRIRAGERDV…VDVQYTRNDL (161 aa)) constitute a Helicase ATP-binding domain. Residue 41-48 (GATGTGKS) coordinates ATP. A Beta-hairpin motif is present at residues 94–117 (YYDYYQPEAYIAQTDTYIEKDSSI). In terms of domain architecture, Helicase C-terminal spans 432-598 (QIDDLIGEIR…PLRKKIADIL (167 aa)). The disordered stretch occupies residues 606–636 (DDTEAAESVPIGGSGRNSSRGRRAQGEPGRA). Residues 656–691 (ADLIKDLTSQMMVAARDLQFELAARFRDEIADLKKE) form the UVR domain.

The protein belongs to the UvrB family. Forms a heterotetramer with UvrA during the search for lesions. Interacts with UvrC in an incision complex.

Its subcellular location is the cytoplasm. Its function is as follows. The UvrABC repair system catalyzes the recognition and processing of DNA lesions. A damage recognition complex composed of 2 UvrA and 2 UvrB subunits scans DNA for abnormalities. Upon binding of the UvrA(2)B(2) complex to a putative damaged site, the DNA wraps around one UvrB monomer. DNA wrap is dependent on ATP binding by UvrB and probably causes local melting of the DNA helix, facilitating insertion of UvrB beta-hairpin between the DNA strands. Then UvrB probes one DNA strand for the presence of a lesion. If a lesion is found the UvrA subunits dissociate and the UvrB-DNA preincision complex is formed. This complex is subsequently bound by UvrC and the second UvrB is released. If no lesion is found, the DNA wraps around the other UvrB subunit that will check the other stand for damage. In Mycobacterium ulcerans (strain Agy99), this protein is UvrABC system protein B.